Here is a 242-residue protein sequence, read N- to C-terminus: Ubiquinone biosynthesis O-methyltransferase (242 aa).

Residues Arg-44, Gly-64, Asp-85, and Met-129 each coordinate S-adenosyl-L-methionine.

It belongs to the methyltransferase superfamily. UbiG/COQ3 family.

It catalyses the reaction a 3-demethylubiquinol + S-adenosyl-L-methionine = a ubiquinol + S-adenosyl-L-homocysteine + H(+). It carries out the reaction a 3-(all-trans-polyprenyl)benzene-1,2-diol + S-adenosyl-L-methionine = a 2-methoxy-6-(all-trans-polyprenyl)phenol + S-adenosyl-L-homocysteine + H(+). Its pathway is cofactor biosynthesis; ubiquinone biosynthesis. O-methyltransferase that catalyzes the 2 O-methylation steps in the ubiquinone biosynthetic pathway. The sequence is that of Ubiquinone biosynthesis O-methyltransferase from Yersinia enterocolitica serotype O:8 / biotype 1B (strain NCTC 13174 / 8081).